We begin with the raw amino-acid sequence, 769 residues long: MPVLSHILGFPRIGLYRELKHALEQYWEKKITENKLLDIGRMLRMRHWKQQINSGINLIPIGDFSWYDHVLDMSIMLNNIPTRFHILSQKKNTLNMLFSIARGDSINNTTITPSEMKKWFNTNYHYIVPEFVQNQIFKLNCTQLLAEIDEALSLNHPIKPVLLGPLTYLWIGKTKETKEFDRLSLLPSLLLVYKEIFNILSKKNIQWIQIDEPALVLELPQTWLKAYLHAYDQLYQTKIKLLLTTYFGKIYHQLPIIKQLKVNGLHIDLTNCSDNDISLLHEQLPKKWILSAGIINGKNIWKTNLYDWFLKLNTITHQRSLWIGSSCSLLHSPIDLNIESKLNNNIKNWFAFAIQKCSEIKLLCDALNSNHNDNSDQQNILKKYYNTNIQRLNSNIINNPQVQERCKNIITLDHSRKTKHITRMKLQHNRFNLPLYPTTTIGSFPQTSEIRKLRLKFKNKQINEDYYYTHIQQYIKKIIQEQEKLDLDILVHGEPERNDMVEYFGENLKGFVSSQHGWIQSYGSRCIKPPIIIGDISRPIPITIPWINYAQSLTNKPVKGILTGPITIMTWSFAREDIPRHMIALQLALAIRDEVMDLEKSGIGVIQIDEPALREGLPLKKSEQSYYLKWAINTFKITVSSVKDNTQIHTHMCYSEFNEIIDDILKLDVDVISIESSRSDLQLLQFIKTAGKKLNEIGPGIYDIHSIHQPSINEIMDKLKKLLQYIPKDRLWINPDCGLKTRSWNEIRESLNNMVIAAKTLRINNGLNN.

5-methyltetrahydropteroyltri-L-glutamate is bound by residues 17-20 (RELK) and K118. Residues 441-443 (IGS) and E494 contribute to the L-homocysteine site. L-methionine-binding positions include 441 to 443 (IGS) and E494. 5-methyltetrahydropteroyltri-L-glutamate is bound by residues 525–526 (RC) and W571. Residue D609 participates in L-homocysteine binding. D609 provides a ligand contact to L-methionine. E615 is a 5-methyltetrahydropteroyltri-L-glutamate binding site. Zn(2+) is bound by residues H651, C653, and E675. Residue H705 is the Proton donor of the active site. Residue C737 participates in Zn(2+) binding.

Belongs to the vitamin-B12 independent methionine synthase family. Zn(2+) is required as a cofactor.

The enzyme catalyses 5-methyltetrahydropteroyltri-L-glutamate + L-homocysteine = tetrahydropteroyltri-L-glutamate + L-methionine. It participates in amino-acid biosynthesis; L-methionine biosynthesis via de novo pathway; L-methionine from L-homocysteine (MetE route): step 1/1. Functionally, catalyzes the transfer of a methyl group from 5-methyltetrahydrofolate to homocysteine resulting in methionine formation. In Blochmanniella floridana, this protein is 5-methyltetrahydropteroyltriglutamate--homocysteine methyltransferase.